The chain runs to 162 residues: Lipoprotein signal peptidase (162 aa).

2 helical membrane-spanning segments follow: residues 56–76 (FLPP…VVWY) and 84–104 (SPLF…NLID). Residues Asp113 and Asp139 contribute to the active site. The helical transmembrane segment at 132–152 (WPIFNVADSCITIGACMIVLF) threads the bilayer.

Belongs to the peptidase A8 family.

The protein localises to the cell inner membrane. It carries out the reaction Release of signal peptides from bacterial membrane prolipoproteins. Hydrolyzes -Xaa-Yaa-Zaa-|-(S,diacylglyceryl)Cys-, in which Xaa is hydrophobic (preferably Leu), and Yaa (Ala or Ser) and Zaa (Gly or Ala) have small, neutral side chains.. It participates in protein modification; lipoprotein biosynthesis (signal peptide cleavage). Its function is as follows. This protein specifically catalyzes the removal of signal peptides from prolipoproteins. This chain is Lipoprotein signal peptidase, found in Chlorobaculum tepidum (strain ATCC 49652 / DSM 12025 / NBRC 103806 / TLS) (Chlorobium tepidum).